A 243-amino-acid chain; its full sequence is Probable septum site-determining protein MinC (243 aa).

This sequence belongs to the MinC family. As to quaternary structure, interacts with MinD and FtsZ.

Functionally, cell division inhibitor that blocks the formation of polar Z ring septums. Rapidly oscillates between the poles of the cell to destabilize FtsZ filaments that have formed before they mature into polar Z rings. Prevents FtsZ polymerization. This Agathobacter rectalis (strain ATCC 33656 / DSM 3377 / JCM 17463 / KCTC 5835 / VPI 0990) (Eubacterium rectale) protein is Probable septum site-determining protein MinC.